The primary structure comprises 214 residues: Lazarillo protein (214 aa).

A signal peptide spans 1–21 (MIRRGLLSVTAALVLLSVSCS). N-linked (GlcNAc...) asparagine glycosylation is found at N38, N74, N84, N90, N130, N158, and N161. The GPI-anchor amidated alanine moiety is linked to residue A192. A propeptide spans 193-214 (GAEHVVGAMLSVAIASLFALLH) (removed in mature form).

It belongs to the calycin superfamily. Lipocalin family. N-glycosylated. Post-translationally, contains disulfide bonds. Expressed by a subset of neuroblasts, ganglion mother cells and neurons of the CNS; by all sensory neurons of the PNS.

Its subcellular location is the cell membrane. Putative role in axonal outgrowth and guidance, required for the navigation of identified commissural neurons. Could be a receptor the midline morphogen. The chain is Lazarillo protein from Schistocerca americana (American grasshopper).